A 317-amino-acid polypeptide reads, in one-letter code: MTEQMTVRGTLKGHSGWVTQIATTPQFPDMILSASRDKTIIMWKLTRDETNYGIPQRALRGHSHFVSDVVISSDGQFALSGSWDGTLRLWDLTTGTTTRRFVGHTKDVLSVAFSADNRQIVSGSRDKTIKLWNTLGVCKYTIQDDSHTEWVSCVRFSPNSSNPIIVSCGWDKMVKVWNLANCKLKTNHIGHTGYLNTVTVSPDGSLCASGGKDGQAMLWDLNEGKHLYTLDGGDTINALCFSPNRYWLCAATGPSIKIWDLEGKIIVDELRQDIITTNSKAEPPQCTSLAWSADGQTLFAGYTDNLIRVWQVTIGTR.

WD repeat units follow at residues 13-44, 61-91, 103-133, 146-178, 190-220, 231-260, and 281-311; these read GHSG…IMWK, GHSH…RLWD, GHTK…KLWN, SHTE…KVWN, GHTG…MLWD, DGGD…KIWD, and AEPP…RVWQ.

This sequence belongs to the WD repeat G protein beta family. Ribosomal protein RACK1 subfamily.

It localises to the cytoplasm. Functionally, involved in the recruitment, assembly and/or regulation of a variety of signaling molecules. Interacts with a wide variety of proteins and plays a role in many cellular processes. Required for VANGL2 membrane localization, inhibits Wnt signaling and regulates cellular polarization and oriented cell division during gastrulation. The protein is Small ribosomal subunit protein RACK1 (gnb2l1) of Danio rerio (Zebrafish).